A 553-amino-acid chain; its full sequence is MWRGVPGCLRDIVQWQVALWSHSFVRTWGSCGKAMTEALSAQAEAAGGLKALVQPNGDAGSNTSGEPLLERLEPAAVGKQVPESGDQAQGGEGQLPSNGEQTPAPVADSGKRKKRRGATGERVVPPPKKRRTGVSFSDEHFAETTYYFEGGLRKVRPYYFDFQTYCKGRWVGRSLLHVFSTEFRSQPLSYYEAAVRAGRLHLNEEPVQDLSIVLKDNDFLRNTVHRHEPPVTAEPIHLLAENNDVVVIDKPSSIPVHPCGRFRHNTVIFILGKEHQLKELHPLHRLDRLTSGVLMFAKTAAVSEKIHEQVRDRQLEKEYVCRVAGEFPDKEVICKEPILVVSYKVGVCRVDPRGKPCETVFQRLSYNGRSSVVQCRPLTGRTHQIRVHLQFLGHPILNDPIYNSTAWGPSRGQGGHIPKTDEELLRDLVAEHQAKESLSMLDLCESDLTPGLIDSTAPSSELAKDSLEGLATAAQKIDGIAEAAPQHLDTPEKAAKADVTQETDPLCAECRVLRQDPLPQDLVMFLHALRYKGPDFEYVSPIPAWARDDWQED.

Residues alanine 76–serine 135 are disordered. Aspartate 287 is a catalytic residue. Position 490 is a phosphothreonine (threonine 490).

It belongs to the pseudouridine synthase RluA family.

The catalysed reaction is a uridine in mRNA = a pseudouridine in mRNA. Its function is as follows. Pseudouridine synthase that catalyzes pseudouridylation of mRNAs. The protein is Pseudouridylate synthase RPUSD2 of Mus musculus (Mouse).